Here is a 229-residue protein sequence, read N- to C-terminus: GTP-binding protein Di-Ras3 (229 aa).

Residues 44–51, 63–69, 91–95, 152–155, and 182–183 each bind GTP; these read GTAGVGKS, RHEYLPT, DSKSG, NKSD, and AK. Positions 66–74 match the Effector region motif; sequence YLPTIENTY. Cys226 is modified (cysteine methyl ester). Cys226 carries S-geranylgeranyl cysteine lipidation. Residues 227–229 constitute a propeptide, removed in mature form; it reads IIM.

It belongs to the small GTPase superfamily. Di-Ras family. As to expression, expressed in normal ovarian and breast epithelial cells but not in ovarian and breast cancers.

The protein resides in the cell membrane. The chain is GTP-binding protein Di-Ras3 (DIRAS3) from Homo sapiens (Human).